The primary structure comprises 112 residues: ATP-dependent Clp protease adapter protein ClpS (112 aa).

The protein belongs to the ClpS family. Binds to the N-terminal domain of the chaperone ClpA.

Its function is as follows. Involved in the modulation of the specificity of the ClpAP-mediated ATP-dependent protein degradation. This is ATP-dependent Clp protease adapter protein ClpS from Rhodococcus jostii (strain RHA1).